Consider the following 178-residue polypeptide: uncharacterized protein (178 aa).

Residues 1-23 (MTMFKKISVLFFTLILAGCSSWS) form the signal peptide.

This is an uncharacterized protein from Haemophilus influenzae (strain ATCC 51907 / DSM 11121 / KW20 / Rd).